The chain runs to 125 residues: Succinate dehydrogenase assembly factor 3, mitochondrial (125 aa).

A mitochondrion-targeting transit peptide spans 1–42 (MRTTNHLYRTVHRQGKPLLPPLHLYRRILRAHRTFPPAQRAL).

It belongs to the complex I LYR family. SDHAF3 subfamily. Interacts with the iron-sulfur protein subunit within the SDH catalytic dimer.

The protein localises to the mitochondrion matrix. In terms of biological role, plays an essential role in the assembly of succinate dehydrogenase (SDH), an enzyme complex (also referred to as respiratory complex II) that is a component of both the tricarboxylic acid (TCA) cycle and the mitochondrial electron transport chain, and which couples the oxidation of succinate to fumarate with the reduction of ubiquinone (coenzyme Q) to ubiquinol. Promotes maturation of the iron-sulfur protein subunit of the SDH catalytic dimer, protecting it from the deleterious effects of oxidants. May act together with SDHAF1. The protein is Succinate dehydrogenase assembly factor 3, mitochondrial of Eremothecium gossypii (strain ATCC 10895 / CBS 109.51 / FGSC 9923 / NRRL Y-1056) (Yeast).